The chain runs to 141 residues: Large ribosomal subunit protein uL11 (141 aa).

The protein belongs to the universal ribosomal protein uL11 family. As to quaternary structure, part of the ribosomal stalk of the 50S ribosomal subunit. Interacts with L10 and the large rRNA to form the base of the stalk. L10 forms an elongated spine to which L12 dimers bind in a sequential fashion forming a multimeric L10(L12)X complex. One or more lysine residues are methylated.

In terms of biological role, forms part of the ribosomal stalk which helps the ribosome interact with GTP-bound translation factors. The polypeptide is Large ribosomal subunit protein uL11 (Clostridium novyi (strain NT)).